Here is a 506-residue protein sequence, read N- to C-terminus: ATP synthase subunit alpha (506 aa).

Residue 170-177 (GDRQTGKT) participates in ATP binding.

This sequence belongs to the ATPase alpha/beta chains family. In terms of assembly, F-type ATPases have 2 components, CF(1) - the catalytic core - and CF(0) - the membrane proton channel. CF(1) has five subunits: alpha(3), beta(3), gamma(1), delta(1), epsilon(1). CF(0) has four main subunits: a(1), b(1), b'(1) and c(9-12).

It is found in the cellular thylakoid membrane. It carries out the reaction ATP + H2O + 4 H(+)(in) = ADP + phosphate + 5 H(+)(out). Produces ATP from ADP in the presence of a proton gradient across the membrane. The alpha chain is a regulatory subunit. This Synechococcus sp. (strain CC9311) protein is ATP synthase subunit alpha.